Reading from the N-terminus, the 636-residue chain is 1-deoxy-D-xylulose-5-phosphate synthase (636 aa).

Residues His-72 and 113–115 (GHA) contribute to the thiamine diphosphate site. Position 144 (Asp-144) interacts with Mg(2+). Thiamine diphosphate is bound by residues 145–146 (GA), Asn-174, Tyr-287, and Glu-370. Asn-174 contributes to the Mg(2+) binding site.

The protein belongs to the transketolase family. DXPS subfamily. In terms of assembly, homodimer. It depends on Mg(2+) as a cofactor. Requires thiamine diphosphate as cofactor.

It catalyses the reaction D-glyceraldehyde 3-phosphate + pyruvate + H(+) = 1-deoxy-D-xylulose 5-phosphate + CO2. It functions in the pathway metabolic intermediate biosynthesis; 1-deoxy-D-xylulose 5-phosphate biosynthesis; 1-deoxy-D-xylulose 5-phosphate from D-glyceraldehyde 3-phosphate and pyruvate: step 1/1. Catalyzes the acyloin condensation reaction between C atoms 2 and 3 of pyruvate and glyceraldehyde 3-phosphate to yield 1-deoxy-D-xylulose-5-phosphate (DXP). The protein is 1-deoxy-D-xylulose-5-phosphate synthase of Rippkaea orientalis (strain PCC 8801 / RF-1) (Cyanothece sp. (strain PCC 8801)).